We begin with the raw amino-acid sequence, 315 residues long: Probable cell division protein WhiA (315 aa).

Positions 280-313 (SLKELGEMLDPPVGKSGINHRLRKIEKIAEELRT) form a DNA-binding region, H-T-H motif.

The protein belongs to the WhiA family.

Functionally, involved in cell division and chromosome segregation. This is Probable cell division protein WhiA from Clostridium beijerinckii (strain ATCC 51743 / NCIMB 8052) (Clostridium acetobutylicum).